Here is a 490-residue protein sequence, read N- to C-terminus: Glutamyl-tRNA(Gln) amidotransferase subunit A (490 aa).

Residues Lys78 and Ser153 each act as charge relay system in the active site. Catalysis depends on Ser177, which acts as the Acyl-ester intermediate.

The protein belongs to the amidase family. GatA subfamily. Heterotrimer of A, B and C subunits.

The catalysed reaction is L-glutamyl-tRNA(Gln) + L-glutamine + ATP + H2O = L-glutaminyl-tRNA(Gln) + L-glutamate + ADP + phosphate + H(+). Allows the formation of correctly charged Gln-tRNA(Gln) through the transamidation of misacylated Glu-tRNA(Gln) in organisms which lack glutaminyl-tRNA synthetase. The reaction takes place in the presence of glutamine and ATP through an activated gamma-phospho-Glu-tRNA(Gln). This Desulforapulum autotrophicum (strain ATCC 43914 / DSM 3382 / VKM B-1955 / HRM2) (Desulfobacterium autotrophicum) protein is Glutamyl-tRNA(Gln) amidotransferase subunit A.